We begin with the raw amino-acid sequence, 509 residues long: Probable triacylglyceride transporter ML0556 (509 aa).

13 helical membrane passes run 48–68 (RITWIVTMYLLGYIAAMPLLS), 78–98 (LLLQVSLAGFAIGSVMTALAG), 112–132 (IQGVASGALLPITLALGADLW), 146–166 (AAQELGSVLGPLYGIFIVWLF), 171–191 (YVFWINIPLTAIAMLMIQVSL), 203–223 (VDVVGGVLLAIALGLVVIGLY), 232–252 (VLPSYGVPVLVGGIVATVAFA), 272–292 (PFLSALGASVAAGAALMVTLV), 309–329 (AAGLLVWFLIALPIGAVLGGW), 339–359 (MTFVGLLITAGGYWLISHWPV), 381–403 (LLVAGLGLGLVIGPLSSATLRVV), 410–430 (IASAAVVVARMTGMLIGVAAL), and 477–497 (IFMITAIVCVIGALLGLLISS).

This sequence belongs to the major facilitator superfamily.

The protein localises to the cell inner membrane. In terms of biological role, in association with lipoprotein LprG probably transports triacylglycerides (TAG) across the inner cell membrane into the periplasm; TAG probably regulates lipid metabolism and growth regulation. May be an efflux transporter and involved in maintaining correct cell wall permeability. Probably required with LprG for normal surface localization of lipoarabinomannan (LAM). The protein is Probable triacylglyceride transporter ML0556 of Mycobacterium leprae (strain TN).